Here is a 331-residue protein sequence, read N- to C-terminus: Ketol-acid reductoisomerase (NADP(+)) (331 aa).

A KARI N-terminal Rossmann domain is found at Ala-2–Thr-182. NADP(+)-binding positions include Tyr-25 to Gln-28, Ser-51, and Asp-83 to Gln-86. His-108 is a catalytic residue. Gly-134 is an NADP(+) binding site. The KARI C-terminal knotted domain maps to Thr-183–Leu-329. Positions 191, 195, 227, and 231 each coordinate Mg(2+). A substrate-binding site is contributed by Ser-252.

It belongs to the ketol-acid reductoisomerase family. Mg(2+) serves as cofactor.

The catalysed reaction is (2R)-2,3-dihydroxy-3-methylbutanoate + NADP(+) = (2S)-2-acetolactate + NADPH + H(+). It catalyses the reaction (2R,3R)-2,3-dihydroxy-3-methylpentanoate + NADP(+) = (S)-2-ethyl-2-hydroxy-3-oxobutanoate + NADPH + H(+). It participates in amino-acid biosynthesis; L-isoleucine biosynthesis; L-isoleucine from 2-oxobutanoate: step 2/4. The protein operates within amino-acid biosynthesis; L-valine biosynthesis; L-valine from pyruvate: step 2/4. In terms of biological role, involved in the biosynthesis of branched-chain amino acids (BCAA). Catalyzes an alkyl-migration followed by a ketol-acid reduction of (S)-2-acetolactate (S2AL) to yield (R)-2,3-dihydroxy-isovalerate. In the isomerase reaction, S2AL is rearranged via a Mg-dependent methyl migration to produce 3-hydroxy-3-methyl-2-ketobutyrate (HMKB). In the reductase reaction, this 2-ketoacid undergoes a metal-dependent reduction by NADPH to yield (R)-2,3-dihydroxy-isovalerate. This chain is Ketol-acid reductoisomerase (NADP(+)), found in Ruminiclostridium cellulolyticum (strain ATCC 35319 / DSM 5812 / JCM 6584 / H10) (Clostridium cellulolyticum).